The primary structure comprises 323 residues: GTP 3',8-cyclase (323 aa).

The Radical SAM core domain maps to lysine 4–glutamate 233. Residue arginine 13 participates in GTP binding. The [4Fe-4S] cluster site is built by cysteine 20 and cysteine 24. Tyrosine 26 is a binding site for S-adenosyl-L-methionine. Cysteine 27 is a binding site for [4Fe-4S] cluster. Arginine 63 is a GTP binding site. Glycine 67 is a binding site for S-adenosyl-L-methionine. Residue threonine 94 coordinates GTP. Residue serine 118 participates in S-adenosyl-L-methionine binding. Lysine 154 provides a ligand contact to GTP. Methionine 188 lines the S-adenosyl-L-methionine pocket. Residues cysteine 250 and cysteine 253 each coordinate [4Fe-4S] cluster. Residue arginine 255 to arginine 257 coordinates GTP. Cysteine 267 provides a ligand contact to [4Fe-4S] cluster.

This sequence belongs to the radical SAM superfamily. MoaA family. In terms of assembly, monomer and homodimer. [4Fe-4S] cluster serves as cofactor.

It carries out the reaction GTP + AH2 + S-adenosyl-L-methionine = (8S)-3',8-cyclo-7,8-dihydroguanosine 5'-triphosphate + 5'-deoxyadenosine + L-methionine + A + H(+). Its pathway is cofactor biosynthesis; molybdopterin biosynthesis. Catalyzes the cyclization of GTP to (8S)-3',8-cyclo-7,8-dihydroguanosine 5'-triphosphate. The sequence is that of GTP 3',8-cyclase from Clostridium perfringens (strain 13 / Type A).